A 270-amino-acid chain; its full sequence is ATP synthase subunit a (270 aa).

Transmembrane regions (helical) follow at residues 37–57 (NVHIDSLFFSVLTGMLFLWVF), 98–118 (VAPLALTIFCWVILMNLMDLI), 143–163 (DVNITMAMALGVFALMIYYSI), 217–237 (VVFILIAAMLPWYLQWVGALP), and 239–259 (AIFHILVILIQAFVFMMLTIV).

It belongs to the ATPase A chain family. F-type ATPases have 2 components, CF(1) - the catalytic core - and CF(0) - the membrane proton channel. CF(1) has five subunits: alpha(3), beta(3), gamma(1), delta(1), epsilon(1). CF(0) has three main subunits: a(1), b(2) and c(9-12). The alpha and beta chains form an alternating ring which encloses part of the gamma chain. CF(1) is attached to CF(0) by a central stalk formed by the gamma and epsilon chains, while a peripheral stalk is formed by the delta and b chains.

It is found in the cell inner membrane. In terms of biological role, key component of the proton channel; it plays a direct role in the translocation of protons across the membrane. In Aliivibrio salmonicida (strain LFI1238) (Vibrio salmonicida (strain LFI1238)), this protein is ATP synthase subunit a.